Consider the following 589-residue polypeptide: RNA-directed RNA polymerase subunit beta (589 aa).

Residues Arg-259–Gly-391 enclose the RdRp catalytic domain. Residues Asp-274, Asp-359, and Asp-360 each contribute to the Mg(2+) site.

In terms of assembly, homodimer; the replicase complex can dimerize. Part of the viral RNA-dependent RNA polymerase complex, the other subunits are the host ribosomal protein S1, EF-Tu and EF-Ts. S1 is needed for the initiation of genomic RNA (+)-strand replication. The cofactor is Mg(2+).

The enzyme catalyses RNA(n) + a ribonucleoside 5'-triphosphate = RNA(n+1) + diphosphate. Functionally, this is the catalytic subunit of the viral RNA-dependent RNA polymerase complex. This complex is involved in viral RNA replication that produces (+)-stranded genomes via a complementary, (-)-stranded intermediate. Binds RNA cooperatively with the host ribosomal protein S1. The protein is RNA-directed RNA polymerase subunit beta of Escherichia coli (Bacteriophage Q-beta).